The chain runs to 280 residues: Phosphatidylglycerol--prolipoprotein diacylglyceryl transferase (280 aa).

3 consecutive transmembrane segments (helical) span residues 19–39, 56–76, and 90–110; these read LSVR…YFVA, IIFY…VIFQ, and IWHG…AGVI. A 1,2-diacyl-sn-glycero-3-phospho-(1'-sn-glycerol) is bound at residue R138. 2 consecutive transmembrane segments (helical) span residues 204–224 and 236–256; these read LGET…FIEG and IRVA…LIVY.

This sequence belongs to the Lgt family.

Its subcellular location is the cell membrane. The enzyme catalyses L-cysteinyl-[prolipoprotein] + a 1,2-diacyl-sn-glycero-3-phospho-(1'-sn-glycerol) = an S-1,2-diacyl-sn-glyceryl-L-cysteinyl-[prolipoprotein] + sn-glycerol 1-phosphate + H(+). Its pathway is protein modification; lipoprotein biosynthesis (diacylglyceryl transfer). Its function is as follows. Catalyzes the transfer of the diacylglyceryl group from phosphatidylglycerol to the sulfhydryl group of the N-terminal cysteine of a prolipoprotein, the first step in the formation of mature lipoproteins. This Staphylococcus aureus (strain MRSA252) protein is Phosphatidylglycerol--prolipoprotein diacylglyceryl transferase.